A 119-amino-acid chain; its full sequence is Large ribosomal subunit protein uL22 (119 aa).

This sequence belongs to the universal ribosomal protein uL22 family. As to quaternary structure, part of the 50S ribosomal subunit.

Its function is as follows. This protein binds specifically to 23S rRNA; its binding is stimulated by other ribosomal proteins, e.g. L4, L17, and L20. It is important during the early stages of 50S assembly. It makes multiple contacts with different domains of the 23S rRNA in the assembled 50S subunit and ribosome. Functionally, the globular domain of the protein is located near the polypeptide exit tunnel on the outside of the subunit, while an extended beta-hairpin is found that lines the wall of the exit tunnel in the center of the 70S ribosome. The chain is Large ribosomal subunit protein uL22 from Trichodesmium erythraeum (strain IMS101).